The chain runs to 400 residues: Acetate kinase (400 aa).

Asn10 contacts Mg(2+). Lys17 is a binding site for ATP. Arg91 is a substrate binding site. Asp148 serves as the catalytic Proton donor/acceptor. ATP-binding positions include 208–212 (HLGNG), 283–285 (DCR), and 331–335 (GIGEN). Residue Glu385 participates in Mg(2+) binding.

The protein belongs to the acetokinase family. As to quaternary structure, homodimer. Requires Mg(2+) as cofactor. The cofactor is Mn(2+).

It localises to the cytoplasm. It carries out the reaction acetate + ATP = acetyl phosphate + ADP. It participates in metabolic intermediate biosynthesis; acetyl-CoA biosynthesis; acetyl-CoA from acetate: step 1/2. Its function is as follows. Catalyzes the formation of acetyl phosphate from acetate and ATP. Can also catalyze the reverse reaction. The protein is Acetate kinase of Shewanella frigidimarina (strain NCIMB 400).